The sequence spans 334 residues: Desumoylating isopeptidase 1 homolog (334 aa).

The 145-residue stretch at 30–174 (TVVRLNVYDM…FLEKCIPQEW (145 aa)) folds into the PPPDE domain. Active-site residues include H55 and C133. Over residues 310–325 (SNIGKTNSTPGTTSNG) the composition is skewed to polar residues. Positions 310–334 (SNIGKTNSTPGTTSNGLAKPTCSEC) are disordered.

The protein belongs to the DeSI family. As to expression, expressed in the pharynx, hypodermis, intestine, head neuron and tail neuron.

It is found in the cytoplasm. The protein resides in the nucleus. Protease which deconjugates SUMO from some substrate proteins. Has isopeptidase but not SUMO-processing activity. Collaborates with ubql-1 in the export of ubiquitinated proteins from the nucleus to the cytoplasm. This chain is Desumoylating isopeptidase 1 homolog, found in Caenorhabditis elegans.